The sequence spans 266 residues: Mitochondrial genome maintenance protein MGM101 (266 aa).

A mitochondrion-targeting transit peptide spans 1–23 (MLHSTKLVFRATPQALCFPVRSY). 2 stretches are compositionally biased toward polar residues: residues 37 to 47 (KTTSKLAPSIT) and 57 to 68 (PSLQEPQSATST). Residues 37–68 (KTTSKLAPSITTEDEVAEQDPSLQEPQSATST) form a disordered region.

It belongs to the MGM101 family. As to quaternary structure, forms homooligomers in vitro.

The protein localises to the mitochondrion matrix. The protein resides in the mitochondrion nucleoid. Its function is as follows. Plays a role in the replication of the mitochondrial genome and the maintenance of its telomeres. Able to catalyze strand annealing and D-loop formation. Binds a wide variety of DNA substrates. Exhibited the highest affinity for DNA molecules carrying 3' ssDNA overhangs (Y-form, 3' FLAP, 3' overhang) and for substrates with complex structures (X-O and Fork). Forms homogeneous ring-shaped structures at the ssDNA native telomeres ends. Oligomers seem to bind to the ssDNA as a filament until they reach the double-stranded region and induce the formation of bends and loops within the double-stranded part of the molecules. The polypeptide is Mitochondrial genome maintenance protein MGM101 (Candida parapsilosis (strain CDC 317 / ATCC MYA-4646) (Yeast)).